The sequence spans 229 residues: Guanylate kinase (229 aa).

Residues 7 to 42 (RVLQKCAYREEFKGDMERSTAATSKLPLEVELSRNS) form the RPE1 insert domain. The Guanylate kinase-like domain occupies 44–222 (GLIIILSSPS…TLKKIHAIIV (179 aa)). Residue 51-58 (SPSGTGKS) participates in ATP binding.

It belongs to the guanylate kinase family.

It is found in the cytoplasm. It catalyses the reaction GMP + ATP = GDP + ADP. Its function is as follows. Essential for recycling GMP and indirectly, cGMP. This Rickettsia conorii (strain ATCC VR-613 / Malish 7) protein is Guanylate kinase (gmk).